The sequence spans 409 residues: Glutamyl-tRNA reductase (409 aa).

Substrate-binding positions include 46 to 49 (TCNR), S88, 93 to 95 (ENE), and Q99. C47 serves as the catalytic Nucleophile. 164–169 (GNGMIA) provides a ligand contact to NADP(+).

Belongs to the glutamyl-tRNA reductase family. In terms of assembly, homodimer.

The catalysed reaction is (S)-4-amino-5-oxopentanoate + tRNA(Glu) + NADP(+) = L-glutamyl-tRNA(Glu) + NADPH + H(+). Its pathway is porphyrin-containing compound metabolism; protoporphyrin-IX biosynthesis; 5-aminolevulinate from L-glutamyl-tRNA(Glu): step 1/2. In terms of biological role, catalyzes the NADPH-dependent reduction of glutamyl-tRNA(Glu) to glutamate 1-semialdehyde (GSA). The protein is Glutamyl-tRNA reductase of Thermoplasma acidophilum (strain ATCC 25905 / DSM 1728 / JCM 9062 / NBRC 15155 / AMRC-C165).